The following is a 322-amino-acid chain: Ribosomal RNA small subunit methyltransferase H (322 aa).

S-adenosyl-L-methionine-binding positions include 40–42 (GGH), D60, F84, D106, and Q113.

This sequence belongs to the methyltransferase superfamily. RsmH family.

The protein localises to the cytoplasm. It catalyses the reaction cytidine(1402) in 16S rRNA + S-adenosyl-L-methionine = N(4)-methylcytidine(1402) in 16S rRNA + S-adenosyl-L-homocysteine + H(+). Functionally, specifically methylates the N4 position of cytidine in position 1402 (C1402) of 16S rRNA. The polypeptide is Ribosomal RNA small subunit methyltransferase H (Mannheimia succiniciproducens (strain KCTC 0769BP / MBEL55E)).